The primary structure comprises 514 residues: Cytochrome P450 monooxygenase verB (514 aa).

The helical transmembrane segment at 5 to 25 (WLSASVLITAVILLVDYLNYY) threads the bilayer. Cys-457 contributes to the heme binding site.

Belongs to the cytochrome P450 family. It depends on heme as a cofactor.

It localises to the membrane. Its pathway is mycotoxin biosynthesis. In terms of biological role, cytochrome P450 monooxygenase; part of the gene cluster that mediates the biosynthesis of 11'-deoxyverticillin A, one of the dimeric epipolythiodioxopiperazines (ETPs) from the verticillin family that act as mycotoxins. 11'-deoxyverticillin A is required for normal conidiation. The nonribosomal peptide synthetase verP is speculated to be responsible for condensation of amino acids to form the carbon skeleton of verticillin, whereas the cluster-specific tailoring enzymes are involved in further modifications leading to the production of 11'-deoxyverticillin A. The polypeptide is Cytochrome P450 monooxygenase verB (Clonostachys rogersoniana).